We begin with the raw amino-acid sequence, 898 residues long: Nitrate reductase [NAD(P)H] (898 aa).

Basic and acidic residues predominate over residues 1–15 (MAASVENRRFTHHEP). The tract at residues 1–65 (MAASVENRRF…SSSEDENEND (65 aa)) is disordered. Position 180 (C180) interacts with Mo-molybdopterin. A Cytochrome b5 heme-binding domain is found at 528-603 (SKMFSMSEVK…LEDYRIGELI (76 aa)). Positions 563 and 586 each coordinate heme. Residues 642–754 (GAKIPTKLVY…KGPLGHVEYT (113 aa)) enclose the FAD-binding FR-type domain. FAD is bound by residues 694–697 (RAYT), 711–715 (VVKIY), F716, F723, 728–730 (LMS), and T781.

The protein belongs to the nitrate reductase family. In terms of assembly, homodimer. Requires FAD as cofactor. The cofactor is heme. Mo-molybdopterin serves as cofactor.

The enzyme catalyses nitrite + NAD(+) + H2O = nitrate + NADH + H(+). It carries out the reaction nitrite + NADP(+) + H2O = nitrate + NADPH + H(+). Its function is as follows. Nitrate reductase is a key enzyme involved in the first step of nitrate assimilation in plants, fungi and bacteria. The protein is Nitrate reductase [NAD(P)H] (NIA1) of Betula pendula (European white birch).